The chain runs to 335 residues: MKVSEFDYELPSELIAQEPVEPRDASRLMVLHRKTQRIEHRIFREIIEYLEPGDLLVLNVSKVIPARLYARKKTGASIEILLIERLEEGIWKCLVRPGQKVKKGTELVIDEDLSAVCLGRGEDGTRILKFQPQDDRLIFEKGRTPLPPYIKNEVPLERYQTVYAKEEGSVAAPTAGLHFTPELIEKLKKKGVQFAEVVLHVGIGTFRPVKVEEVEKHKMHEEFYQVTKETIKKLRETRERGNRIVAVGTTTVRTLETIARLPEQEEYVGKTDLFIYPPFEFKLVDALITNFHLPRSTLLMLVAAFAGKDFVMEAYREAVKRRYRFFSFGDAMLIL.

Belongs to the QueA family. In terms of assembly, monomer.

Its subcellular location is the cytoplasm. It catalyses the reaction 7-aminomethyl-7-carbaguanosine(34) in tRNA + S-adenosyl-L-methionine = epoxyqueuosine(34) in tRNA + adenine + L-methionine + 2 H(+). Its pathway is tRNA modification; tRNA-queuosine biosynthesis. Functionally, transfers and isomerizes the ribose moiety from AdoMet to the 7-aminomethyl group of 7-deazaguanine (preQ1-tRNA) to give epoxyqueuosine (oQ-tRNA). In Thermotoga petrophila (strain ATCC BAA-488 / DSM 13995 / JCM 10881 / RKU-1), this protein is S-adenosylmethionine:tRNA ribosyltransferase-isomerase.